Here is a 1592-residue protein sequence, read N- to C-terminus: MGTDPLIIRNNGSFWEVDDFTRLGRTQLLSYYLPLAIIASIGIFALCRSGLSRYVRSAECDLVNEYLFGAQEERKEDNSIERLLRNSNTQANYVNVKKQGRILKLRHFDITTIDVKQIDAKNHGGLTFSRPSTSDHLRKSSEIVLMSLQIIGLSFLRVTKINIELTNRDVTTLLLFWLILLSLSILRVYKRSTNLWAICFTAHTTIWISTWIPIRSVYIGNIDDVPSQIFYIFEFVITSTLQPIKLTSPIKDNSSIIYVRDDHTSPSREHISSILSCITWSWITNFIWEAQKNTIKLKDIWGLSMEDYSIFILKGFTRRNKHINNLTLALFESFKTYLLIGMLWVLVNSIVNLLPTILMKRFLEIVDNPNRSSSCMNLAWLYIIGMFICRLTLAICNSQGQFVSDKICLRIRAILIGEIYAKGLRRRLFTSPKTSSDSDSISANLGTIINLISIDSFKVSELANYLYVTVQAVIMIIVVVGLLFNFLGVSAFAGISIILVMFPLNFLLANLLGKFQKQTLKCTDQRISKLNECLQNIRIVKYFAWERNIINEIKSIRQKELRSLLKKSLVWSVTSFLWFVTPTLVTGVTFAICTFVQHEDLNAPLAFTTLSLFTLLKTPLDQLSNMLSFINQSKVSLKRISDFLRMDDTEKYNQLTISPDKNKIEFKNATLTWNENDSDMNAFKLCGLNIKFQIGKLNLILGSTGSGKSALLLGLLGELNLISGSIIVPSLEPKHDLIPDCEGLTNSFAYCSQSAWLLNDTVKNNIIFDNFYNEDRYNKVIDACGLKRDLEILPAGDLTEIGEKGITLSGGQKQRISLARAVYSSAKHVLLDDCLSAVDSHTAVWIYENCITGPLMKNRTCILVTHNVSLTLRNAHFAIVLENGKVKNQGTITELQSKGLFKEKYVQLSSRDSINEKNANRLKAPRKNDSQKIEPVTENINFDANFVNDGQLIEEEEKSNGAISPDVYKWYLKFFGGFKALTALFALYITAQILFISQSWWIRHWVNDTNVRINAPGFAMDTLPLKGMTDSSKNKHNAFYYLTVYFLIGIIQAMLGGFKTMMTFLSGMRASRKIFNNLLDLVLHAQIRFFDVTPVGRIMNRFSKDIEGVDQELIPYLEVTIFCLIQCASIIFLITVITPRFLTVAVIVFVLYFFVGKWYLTASRELKRLDSITKSPIFQHFSETLVGVCTIRAFGDERRFILENMNKIDQNNRAFFYLSVTVKWFSFRVDMIGAFIVLASGSFILLNIANIDSGLAGISLTYAILFTDGALWLVRLYSTFEMNMNSVERLKEYSSIEQENYLGHDEGRILLLNEPSWPKDGEIEIENLSLRYAPNLPPVIRNVSFKVDPQSKIGIVGRTGAGKSTIITALFRLLEPITGCIKIDGQDISKIDLVTLRRSITIIPQDPILFAGTIKSNVDPYDEYDEKKIFKALSQVNLISSHEFEEVLNSEERFNSTHNKFLNLHTEIAEGGLNLSQGERQLLFIARSLLREPKIILLDEATSSIDYDSDHLIQGIIRSEFNKSTILTIAHRLRSVIDYDRIIVMDAGEVKEYDRPSELLKDERGIFYSMCRDSGGLELLKQIAKQSSKMMK.

The Vacuolar segment spans residues 1-33; the sequence is MGTDPLIIRNNGSFWEVDDFTRLGRTQLLSYYL. Residue asparagine 11 is glycosylated (N-linked (GlcNAc...) asparagine). A helical transmembrane segment spans residues 34–54; it reads PLAIIASIGIFALCRSGLSRY. Over 55-74 the chain is Cytoplasmic; sequence VRSAECDLVNEYLFGAQEER. A helical membrane pass occupies residues 75–95; the sequence is KEDNSIERLLRNSNTQANYVN. At 96 to 100 the chain is on the vacuolar side; it reads VKKQG. Residues 101 to 121 traverse the membrane as a helical segment; sequence RILKLRHFDITTIDVKQIDAK. Residues 122–131 are Cytoplasmic-facing; sequence NHGGLTFSRP. A helical transmembrane segment spans residues 132 to 152; that stretch reads STSDHLRKSSEIVLMSLQIIG. At 153 to 170 the chain is on the vacuolar side; that stretch reads LSFLRVTKINIELTNRDV. A helical transmembrane segment spans residues 171 to 191; the sequence is TTLLLFWLILLSLSILRVYKR. The Cytoplasmic portion of the chain corresponds to 192 to 329; it reads STNLWAICFT…NKHINNLTLA (138 aa). The helical transmembrane segment at 330-350 threads the bilayer; the sequence is LFESFKTYLLIGMLWVLVNSI. Positions 338-632 constitute an ABC transmembrane type-1 1 domain; the sequence is LLIGMLWVLV…LSNMLSFINQ (295 aa). Residues 351-379 lie on the Vacuolar side of the membrane; the sequence is VNLLPTILMKRFLEIVDNPNRSSSCMNLA. Asparagine 370 is a glycosylation site (N-linked (GlcNAc...) asparagine). A helical transmembrane segment spans residues 380–400; the sequence is WLYIIGMFICRLTLAICNSQG. The Cytoplasmic portion of the chain corresponds to 401–465; sequence QFVSDKICLR…SFKVSELANY (65 aa). A helical membrane pass occupies residues 466-486; that stretch reads LYVTVQAVIMIIVVVGLLFNF. Residues 487 to 489 lie on the Vacuolar side of the membrane; sequence LGV. A helical membrane pass occupies residues 490-510; sequence SAFAGISIILVMFPLNFLLAN. Residues 511–572 lie on the Cytoplasmic side of the membrane; sequence LLGKFQKQTL…SLLKKSLVWS (62 aa). Residues 573 to 593 traverse the membrane as a helical segment; that stretch reads VTSFLWFVTPTLVTGVTFAIC. Residues 594–614 are Vacuolar-facing; it reads TFVQHEDLNAPLAFTTLSLFT. A helical membrane pass occupies residues 615–635; the sequence is LLKTPLDQLSNMLSFINQSKV. Over 636-989 the chain is Cytoplasmic; it reads SLKRISDFLR…ALTALFALYI (354 aa). The ABC transporter 1 domain occupies 664–908; that stretch reads IEFKNATLTW…GLFKEKYVQL (245 aa). 702 to 709 is an ATP binding site; the sequence is GSTGSGKS. Positions 981–1282 constitute an ABC transmembrane type-1 2 domain; it reads LTALFALYIT…LVRLYSTFEM (302 aa). Residues 990 to 1010 traverse the membrane as a helical segment; that stretch reads TAQILFISQSWWIRHWVNDTN. Residues 1011–1051 lie on the Vacuolar side of the membrane; the sequence is VRINAPGFAMDTLPLKGMTDSSKNKHNAFYYLTVYFLIGII. The helical transmembrane segment at 1052 to 1072 threads the bilayer; the sequence is QAMLGGFKTMMTFLSGMRASR. At 1073 to 1115 the chain is on the cytoplasmic side; that stretch reads KIFNNLLDLVLHAQIRFFDVTPVGRIMNRFSKDIEGVDQELIP. Residues 1116–1136 form a helical membrane-spanning segment; it reads YLEVTIFCLIQCASIIFLITV. A topological domain (vacuolar) is located at residue isoleucine 1137. Residues 1138–1158 form a helical membrane-spanning segment; sequence TPRFLTVAVIVFVLYFFVGKW. Residues 1159 to 1229 are Cytoplasmic-facing; that stretch reads YLTASRELKR…VTVKWFSFRV (71 aa). Residues 1230–1250 traverse the membrane as a helical segment; sequence DMIGAFIVLASGSFILLNIAN. Over 1251-1252 the chain is Vacuolar; sequence ID. Residues 1253 to 1273 form a helical membrane-spanning segment; sequence SGLAGISLTYAILFTDGALWL. At 1274-1592 the chain is on the cytoplasmic side; sequence VRLYSTFEMN…IAKQSSKMMK (319 aa). The ABC transporter 2 domain maps to 1323 to 1572; sequence IEIENLSLRY…ERGIFYSMCR (250 aa). 1357 to 1364 is a binding site for ATP; that stretch reads GRTGAGKS.

It belongs to the ABC transporter superfamily. In terms of assembly, ABC transporter which may be involved in multidrug resistance.

It is found in the vacuole membrane. This Saccharomyces cerevisiae (strain ATCC 204508 / S288c) (Baker's yeast) protein is ABC transporter ATP-binding protein/permease VMR1 (VMR1).